We begin with the raw amino-acid sequence, 361 residues long: Alanine racemase (361 aa).

Lys34 serves as the catalytic Proton acceptor; specific for D-alanine. Lys34 carries the post-translational modification N6-(pyridoxal phosphate)lysine. Substrate is bound at residue Arg129. Tyr254 functions as the Proton acceptor; specific for L-alanine in the catalytic mechanism. Substrate is bound at residue Met302.

This sequence belongs to the alanine racemase family. It depends on pyridoxal 5'-phosphate as a cofactor.

The enzyme catalyses L-alanine = D-alanine. It catalyses the reaction L-serine = D-serine. The protein operates within amino-acid biosynthesis; D-alanine biosynthesis; D-alanine from L-alanine: step 1/1. Catalyzes the interconversion of L-alanine and D-alanine. Likely plays an important role in supplying D-alanine, which is an indispensable constituent in the biosynthesis of bacterial cell-wall peptidoglycan. To a lesser extent, is also able to racemize L-serine and D-serine. Does not act on other proteinogenic amino-acids. The polypeptide is Alanine racemase (alr1) (Vibrio cholerae serotype O1 (strain ATCC 39315 / El Tor Inaba N16961)).